Reading from the N-terminus, the 598-residue chain is Peroxisomal multifunctional enzyme type 2 (598 aa).

The interval 1 to 309 (MSSSDGKLRY…LEVLEKLKEG (309 aa)) is (3R)-hydroxyacyl-CoA dehydrogenase. NAD(+)-binding positions include 16–40 (VVTGAGAGLGREYALLFAERGAKVV), Leu-24, Asp-43, 78–79 (SV), and Asn-102. Ser-154 contacts substrate. The active-site Proton acceptor is the Tyr-167. NAD(+) is bound by residues 167–171 (YTAAK) and 199–202 (AASR). The tract at residues 310 to 598 (GGDAIEDAFE…VDLKSSQAKL (289 aa)) is enoyl-CoA hydratase 2. Residues 390–391 (HG), Lys-419, 496–501 (DKNPLH), Gly-519, and Phe-549 each bind (3R)-3-hydroxydecanoyl-CoA. The MaoC-like domain maps to 469–586 (PAPNRQPDAT…VETGKEVISG (118 aa)). The Microbody targeting signal signature appears at 596-598 (AKL).

It belongs to the short-chain dehydrogenases/reductases (SDR) family. Homodimer.

The protein localises to the peroxisome. The catalysed reaction is a (3R)-3-hydroxyacyl-CoA + NAD(+) = a 3-oxoacyl-CoA + NADH + H(+). The enzyme catalyses a (3R)-3-hydroxyacyl-CoA = a (2E)-enoyl-CoA + H2O. Its pathway is lipid metabolism; fatty acid beta-oxidation. Its function is as follows. Bifunctional enzyme acting on the peroxisomal beta-oxidation pathway for fatty acids. This Drosophila melanogaster (Fruit fly) protein is Peroxisomal multifunctional enzyme type 2.